The primary structure comprises 216 residues: Ribonuclease HII (216 aa).

Residues 27 to 216 enclose the RNase H type-2 domain; sequence ASLAGVDEAG…VKEHVKNCEG (190 aa). Residues Asp33, Glu34, and Asp125 each coordinate a divalent metal cation.

This sequence belongs to the RNase HII family. Mn(2+) is required as a cofactor. It depends on Mg(2+) as a cofactor.

The protein resides in the cytoplasm. The enzyme catalyses Endonucleolytic cleavage to 5'-phosphomonoester.. Its function is as follows. Endonuclease that specifically degrades the RNA of RNA-DNA hybrids. In Geotalea daltonii (strain DSM 22248 / JCM 15807 / FRC-32) (Geobacter daltonii), this protein is Ribonuclease HII.